A 165-amino-acid polypeptide reads, in one-letter code: Type IV major pilin protein PilE1 (165 aa).

Residues 1–7 constitute a propeptide, leader sequence; that stretch reads MNTLQKG. Phenylalanine 8 carries the N-methylphenylalanine modification. The helical transmembrane segment at 8–28 threads the bilayer; that stretch reads FTLIELMIVIAIVGILAAVAL. O-linked (DADDGlc) serine glycosylation occurs at serine 70. Serine 75 is subject to O-(2-aminoethylphosphoryl)serine; alternate. Serine 75 is modified (O-(2-cholinephosphoryl)serine; alternate). Serine 75 is subject to Phosphoserine; alternate. An O-(sn-1-glycerophosphoryl)serine; partial modification is found at serine 101. Cysteine 128 and cysteine 158 are oxidised to a cystine. The segment covering 137–153 has biased composition (basic and acidic residues); it reads DDTVADAKDGKEIDTKH. The disordered stretch occupies residues 137 to 165; it reads DDTVADAKDGKEIDTKHLPSTCRDNFDAK.

The protein belongs to the N-Me-Phe pilin family. In terms of assembly, the pili are polar flexible filaments of about 5.4 nanometers diameter and 2.5 micrometers average length; they consist of only a single polypeptide chain arranged in a helical configuration of five subunits per turn in the assembled pilus. The O-linked glycan identified as Gal-GlcNAc disaccharide in PubMed:7477282 and PubMed:10048019 is now identified as either a hexosyl-diacetamidotrideoxyhexoside (DATDHex) by mass spectrometry in PubMed:15249686, or alpha-D-galactopyranosyl-(1-&gt;3)-2,4-diacetamido-2,4-dideoxy-beta-D-glucopyranoside (DADDGlc) by X-ray diffraction in PubMed:16949362. It is not clear whether there is a chemical difference in the glycosylation of the two derivatives of strain MS11 used in these experiments, or not. In terms of processing, in some MS11 derivative strains, Ser-75 is modified to O-(2-aminoethylphosphoryl)serine, and in some other derivatives that can be secondarily modified to O-(2-cholinephosphoryl)serine by N-methylation.

It localises to the fimbrium. The protein resides in the membrane. Functionally, major component of the type IV pilus (T4P) that plays a role in cellular adherence, microcolony formation, resistance to neutrophil mediated killing, twitching motility as well as transformation. Mediates the attachment and the formation of bacterial microcolonies on host epithelial cells. Mechanistically, pili retractation induces host NF-kappa-B activation in infected cells, which is temporally associated with the formation of gonococcal microcolonies. This chain is Type IV major pilin protein PilE1 (pilE1), found in Neisseria gonorrhoeae.